A 388-amino-acid chain; its full sequence is Gastricsin (388 aa).

A signal peptide spans 1–16 (MKWMVVVLVCLQLLEA). Residues 17-59 (AVVKVPLKKFKSIRETMKEKGLLGEFLRTHKYDPAWKYRFGDL) constitute a propeptide, activation peptide. In terms of domain architecture, Peptidase A1 spans 73–385 (YFGEISIGTP…DLGNNRVGFA (313 aa)). The active site involves Asp-91. 2 disulfides stabilise this stretch: Cys-104/Cys-109 and Cys-267/Cys-271. Residue Asp-276 is part of the active site. Residues Cys-310 and Cys-343 are joined by a disulfide bond.

The protein belongs to the peptidase A1 family.

The protein resides in the secreted. The enzyme catalyses More restricted specificity than pepsin A, but shows preferential cleavage at Tyr-|-Xaa bonds. High activity on hemoglobin.. Its function is as follows. Hydrolyzes a variety of proteins. The polypeptide is Gastricsin (PGC) (Homo sapiens (Human)).